Consider the following 262-residue polypeptide: tRNA (guanine-N(1)-)-methyltransferase (262 aa).

S-adenosyl-L-methionine is bound by residues Gly-112 and 132-137 (IGDYIL).

Belongs to the RNA methyltransferase TrmD family. In terms of assembly, homodimer.

Its subcellular location is the cytoplasm. The enzyme catalyses guanosine(37) in tRNA + S-adenosyl-L-methionine = N(1)-methylguanosine(37) in tRNA + S-adenosyl-L-homocysteine + H(+). Specifically methylates guanosine-37 in various tRNAs. The chain is tRNA (guanine-N(1)-)-methyltransferase from Desulfatibacillum aliphaticivorans.